The chain runs to 333 residues: Ketol-acid reductoisomerase (NADP(+)) (333 aa).

The 171-residue stretch at 1–171 (MSNDTQPKIA…GGARANIIKT (171 aa)) folds into the KARI N-terminal Rossmann domain. NADP(+) contacts are provided by residues 14–17 (YGSQ), arginine 37, threonine 42, and 72–75 (DMVQ). Histidine 97 is a catalytic residue. Glycine 123 serves as a coordination point for NADP(+). One can recognise a KARI C-terminal knotted domain in the interval 172 to 317 (TFKEETETDL…KKLRAKMVWL (146 aa)). Aspartate 180, glutamate 184, glutamate 216, and glutamate 220 together coordinate Mg(2+). Serine 241 is a substrate binding site.

Belongs to the ketol-acid reductoisomerase family. The cofactor is Mg(2+).

It catalyses the reaction (2R)-2,3-dihydroxy-3-methylbutanoate + NADP(+) = (2S)-2-acetolactate + NADPH + H(+). The enzyme catalyses (2R,3R)-2,3-dihydroxy-3-methylpentanoate + NADP(+) = (S)-2-ethyl-2-hydroxy-3-oxobutanoate + NADPH + H(+). It participates in amino-acid biosynthesis; L-isoleucine biosynthesis; L-isoleucine from 2-oxobutanoate: step 2/4. Its pathway is amino-acid biosynthesis; L-valine biosynthesis; L-valine from pyruvate: step 2/4. Functionally, involved in the biosynthesis of branched-chain amino acids (BCAA). Catalyzes an alkyl-migration followed by a ketol-acid reduction of (S)-2-acetolactate (S2AL) to yield (R)-2,3-dihydroxy-isovalerate. In the isomerase reaction, S2AL is rearranged via a Mg-dependent methyl migration to produce 3-hydroxy-3-methyl-2-ketobutyrate (HMKB). In the reductase reaction, this 2-ketoacid undergoes a metal-dependent reduction by NADPH to yield (R)-2,3-dihydroxy-isovalerate. The polypeptide is Ketol-acid reductoisomerase (NADP(+)) (Xanthomonas euvesicatoria pv. vesicatoria (strain 85-10) (Xanthomonas campestris pv. vesicatoria)).